The chain runs to 248 residues: Kallikrein-12 (248 aa).

The signal sequence occupies residues 1-17 (MGLSIFLLLCVLGLSQA). The Peptidase S1 domain occupies 22-246 (IFNGTECGRN…YVDWIRMIMR (225 aa)). N-linked (GlcNAc...) asparagine glycosylation occurs at Asn-24. 6 disulfides stabilise this stretch: Cys-28–Cys-161, Cys-47–Cys-63, Cys-133–Cys-235, Cys-140–Cys-206, Cys-172–Cys-186, and Cys-196–Cys-222. Residues His-62 and Asp-108 each act as charge relay system in the active site. N-linked (GlcNAc...) asparagine glycosylation is present at Asn-163. Ser-200 acts as the Charge relay system in catalysis.

It belongs to the peptidase S1 family. Kallikrein subfamily.

The protein localises to the secreted. The sequence is that of Kallikrein-12 (KLK12) from Homo sapiens (Human).